We begin with the raw amino-acid sequence, 131 residues long: Large ribosomal subunit protein bL17 (131 aa).

This sequence belongs to the bacterial ribosomal protein bL17 family. As to quaternary structure, part of the 50S ribosomal subunit. Contacts protein L32.

This chain is Large ribosomal subunit protein bL17, found in Teredinibacter turnerae (strain ATCC 39867 / T7901).